The primary structure comprises 287 residues: 4-hydroxybenzoate octaprenyltransferase (287 aa).

Transmembrane regions (helical) follow at residues 22–42 (IGTL…AQGF), 45–65 (LGVL…GCVI), 91–111 (TSTE…LLVL), 114–134 (NSLT…YPFM), 139–159 (QLPQ…AFAA), 161–181 (ANAL…WTIA), 212–232 (IIIA…GWLE), 236–256 (WIYF…QLQI), and 267–287 (AFLD…LGYL).

This sequence belongs to the UbiA prenyltransferase family. Mg(2+) is required as a cofactor.

The protein resides in the cell inner membrane. It catalyses the reaction all-trans-octaprenyl diphosphate + 4-hydroxybenzoate = 4-hydroxy-3-(all-trans-octaprenyl)benzoate + diphosphate. Its pathway is cofactor biosynthesis; ubiquinone biosynthesis. Functionally, catalyzes the prenylation of para-hydroxybenzoate (PHB) with an all-trans polyprenyl group. Mediates the second step in the final reaction sequence of ubiquinone-8 (UQ-8) biosynthesis, which is the condensation of the polyisoprenoid side chain with PHB, generating the first membrane-bound Q intermediate 3-octaprenyl-4-hydroxybenzoate. This is 4-hydroxybenzoate octaprenyltransferase from Psychromonas ingrahamii (strain DSM 17664 / CCUG 51855 / 37).